A 186-amino-acid chain; its full sequence is Adenylate kinase (186 aa).

Residue 14 to 19 (GAGKGT) coordinates ATP. The interval 34–63 (STGDILRDHVARGTPLGERVRPIMERGDLV) is NMP. AMP-binding positions include threonine 35, arginine 40, 61 to 63 (DLV), 84 to 87 (GFPR), and glutamine 91. Residues 125–135 (RRAELEGRSDD) are LID. Position 126 (arginine 126) interacts with ATP. AMP is bound by residues arginine 132 and arginine 143. Residue glycine 171 participates in ATP binding.

Belongs to the adenylate kinase family. Monomer.

The protein resides in the cytoplasm. The catalysed reaction is AMP + ATP = 2 ADP. Its pathway is purine metabolism; AMP biosynthesis via salvage pathway; AMP from ADP: step 1/1. Its function is as follows. Catalyzes the reversible transfer of the terminal phosphate group between ATP and AMP. Plays an important role in cellular energy homeostasis and in adenine nucleotide metabolism. The sequence is that of Adenylate kinase from Thermus thermophilus (strain ATCC BAA-163 / DSM 7039 / HB27).